Reading from the N-terminus, the 281-residue chain is 2-dehydro-3-deoxyphosphooctonate aldolase (281 aa).

It belongs to the KdsA family.

It localises to the cytoplasm. It carries out the reaction D-arabinose 5-phosphate + phosphoenolpyruvate + H2O = 3-deoxy-alpha-D-manno-2-octulosonate-8-phosphate + phosphate. It participates in carbohydrate biosynthesis; 3-deoxy-D-manno-octulosonate biosynthesis; 3-deoxy-D-manno-octulosonate from D-ribulose 5-phosphate: step 2/3. The protein operates within bacterial outer membrane biogenesis; lipopolysaccharide biosynthesis. In Psychromonas ingrahamii (strain DSM 17664 / CCUG 51855 / 37), this protein is 2-dehydro-3-deoxyphosphooctonate aldolase.